The following is a 155-amino-acid chain: MGKKGVYAGVKADFRYGDESVTRLINTIMSDGKKSVAAKIVYEAMDIIDAKVEDADALEVFRKALGNVAPLVEVRSKRVGGATYQIPMEVKPSRREALAFRWIKQFATRRGGRGMAEKLAAELLDAANEQGASVKKRDEVHRMADANKAFAHFRF.

It belongs to the universal ribosomal protein uS7 family. As to quaternary structure, part of the 30S ribosomal subunit. Contacts proteins S9 and S11.

Functionally, one of the primary rRNA binding proteins, it binds directly to 16S rRNA where it nucleates assembly of the head domain of the 30S subunit. Is located at the subunit interface close to the decoding center, probably blocks exit of the E-site tRNA. The sequence is that of Small ribosomal subunit protein uS7 from Prosthecochloris aestuarii (strain DSM 271 / SK 413).